The following is a 325-amino-acid chain: Pyruvate dehydrogenase E1 component subunit beta (325 aa).

Glutamate 60 lines the thiamine diphosphate pocket.

As to quaternary structure, heterodimer of an alpha and a beta chain. Requires thiamine diphosphate as cofactor.

It carries out the reaction N(6)-[(R)-lipoyl]-L-lysyl-[protein] + pyruvate + H(+) = N(6)-[(R)-S(8)-acetyldihydrolipoyl]-L-lysyl-[protein] + CO2. Functionally, the pyruvate dehydrogenase complex catalyzes the overall conversion of pyruvate to acetyl-CoA and CO(2). It contains multiple copies of three enzymatic components: pyruvate dehydrogenase (E1), dihydrolipoamide acetyltransferase (E2) and lipoamide dehydrogenase (E3). This is Pyruvate dehydrogenase E1 component subunit beta (pdhB) from Staphylococcus aureus (strain COL).